A 940-amino-acid chain; its full sequence is Pentatricopeptide repeat-containing protein At5g14770, mitochondrial (940 aa).

Residues 1-24 constitute a mitochondrion transit peptide; sequence MIMIRIWNNYKGKYRFFLSNCRSF. PPR repeat units lie at residues 59-93, 94-129, 130-161, 162-196, 197-231, 241-259, 260-294, 295-329, 330-364, 365-399, 400-434, 435-469, 470-504, 505-539, 540-573, 574-608, 609-643, 644-678, 679-713, 714-748, 749-783, 784-818, 819-853, and 854-891; these read YVSLFHTLFRLYLSCERLYGAARTLSAMCTFGVVP, DSRLWNSLIHQFNVNGLVHDQVSLIYSKMIACGVSP, DVFALNVLIHSFCKVGRLSFAISLLRNRVISI, DTVTYNTVISGLCEHGLADEAYQFLSEMVKMGILP, DTVSYNTLIDGFCKVGNFVRAKALVDEISELNLIT, NLHAIEEAYRDMVMSGFDP, DVVTFSSIINRLCKGGKVLEGGLLLREMEEMSVYP, NHVTYTTLVDSLFKANIYRHALALYSQMVVRGIPV, DLVVYTVLMDGLFKAGDLREAEKTFKMLLEDNQVP, NVVTYTALVDGLCKAGDLSSAEFIITQMLEKSVIP, NVVTYSSMINGYVKKGMLEEAVSLLRKMEDQNVVP, NGFTYGTVIDGLFKAGKEEMAIELSKEMRLIGVEE, NNYILDALVNHLKRIGRIKEVKGLVKDMVSKGVTL, DQINYTSLIDVFFKGGDEEAALAWAEEMQERGMPW, DVVSYNVLISGMLKFGKVGADWAYKGMREKGIEP, DIATFNIMMNSQRKQGDSEGILKLWDKMKSCGIKP, SLMSCNIVVGMLCENGKMEEAIHILNQMMLMEIHP, NLTTYRIFLDTSSKHKRADAIFKTHETLLSYGIKL, SRQVYNTLIATLCKLGMTKKAAMVMGDMEARGFIP, DTVTFNSLMHGYFVGSHVRKALSTYSVMMEAGISP, NVATYNTIIRGLSDAGLIKEVDKWLSEMKSRGMRP, DDFTYNALISGQAKIGNMKGSMTIYCEMIADGLVP, KTSTYNVLISEFANVGKMLQARELLKEMGKRGVSP, and NTSTYCTMISGLCKLCTHPDVEWNKKAMYLAEAKGLLK.

It belongs to the PPR family. P subfamily.

The protein localises to the mitochondrion. The chain is Pentatricopeptide repeat-containing protein At5g14770, mitochondrial from Arabidopsis thaliana (Mouse-ear cress).